The sequence spans 457 residues: Peptidyl-prolyl cis-trans isomerase FKBP5 (457 aa).

Position 1 is an N-acetylmethionine (Met1). Positions 1–11 (MTTDEGAKNSR) are enriched in basic and acidic residues. Residues 1–27 (MTTDEGAKNSRENPTATVAEQGEDVTS) are disordered. The residue at position 28 (Lys28) is an N6-acetyllysine. 2 consecutive PPIase FKBP-type domains span residues 50-138 (GDKV…LDFK) and 165-251 (GARV…KSFE). 3 TPR repeats span residues 268-301 (AAIVKEKGTLYFKGGKYVQAVIQYGKIVSWLEME), 317-350 (LAAFLNLAMCYLKLREYTKAVECCDKALGLDSAN), and 351-384 (EKGLYRRGEAQLLMNEFESAKGDFEKVLEVNPQN). Residues 423–457 (EEANKAMSKKTSEGVTNEKLAVSHAVEEEKPEGHV) are disordered. A Phosphoserine modification is found at Ser445. Residues 447 to 457 (AVEEEKPEGHV) show a composition bias toward basic and acidic residues.

As to quaternary structure, part of a heteromultimeric cytoplasmic complex with HSP90AA1, HSPA1A/HSPA1B and steroid receptors. Upon ligand binding dissociates from the complex and FKBP4 takes its place. Interacts with functionally mature heterooligomeric progesterone receptor complexes along with HSP90 and TEBP. Interacts with NR3C1. Interacts with Akt/AKT1 and PHLPP1; enhancing dephosphorylation and subsequent activation of Akt/AKT1. Interacts with IFI44L; this interaction modulates the kinase activity of IKBKB and IKBKE. Interacts with IKBKB and IKBKE. Acetylation impairs ability to promote interaction between Akt/AKT1 and PHLPP1. Deacetylation by SIRT7 promotes interaction between Akt/AKT1 and PHLPP1, leading to suppress Akt/AKT1 activation. Post-translationally, ubiquitinated, leading to degradation in a proteasome-dependent manner. Deubiquitinated by USP49, leading to stabilization.

It localises to the cytoplasm. The protein localises to the nucleus. It carries out the reaction [protein]-peptidylproline (omega=180) = [protein]-peptidylproline (omega=0). Its activity is regulated as follows. Inhibited by both FK506 and rapamycin. In terms of biological role, immunophilin protein with PPIase and co-chaperone activities. Component of unligated steroid receptors heterocomplexes through interaction with heat-shock protein 90 (HSP90). Plays a role in the intracellular trafficking of heterooligomeric forms of steroid hormone receptors maintaining the complex into the cytoplasm when unliganded. Acts as a regulator of Akt/AKT1 activity by promoting the interaction between Akt/AKT1 and PHLPP1, thereby enhancing dephosphorylation and subsequent activation of Akt/AKT1. Interacts with IKBKE and IKBKB which facilitates IKK complex assembly leading to increased IKBKE and IKBKB kinase activity, NF-kappaB activation, and IFN production. This is Peptidyl-prolyl cis-trans isomerase FKBP5 (FKBP5) from Aotus nancymaae (Ma's night monkey).